We begin with the raw amino-acid sequence, 469 residues long: MEYHQPEDPAPGKAGTAEAVIPENHEVLAGPDEHPQDTDARDADGEAREREPADQALLPSQCGDNLESPLPEASSAPPGPTLGTLPEVETIRACSMPQELPQSPRTRQPEPDFYCVKWIPWKGEQTPIITQSTNGPCPLLAIMNILFLQWKVKLPPQKEVITSDELMAHLGNCLLSIKPQEKSEGLQLNFQQNVDDAMTVLPKLATGLDVNVRFTGVSDFEYTPECSVFDLLGIPLYHGWLVDPQSPEAVRAVGKLSYNQLVERIITCKHSSDTNLVTEGLIAEQFLETTAAQLTYHGLCELTAAAKEGELSVFFRNNHFSTMTKHKSHLYLLVTDQGFLQEEQVVWESLHNVDGDSCFCDSDFHLSHSLGKGPGAEGGSGSPETQLQVDQDYLIALSLQQQQPRGPLGLTDLELAQQLQQEEYQQQQAAQPVRMRTRVLSLQGRGATSGRPAGERRQRPKHESDCILL.

Residues 1 to 85 (MEYHQPEDPA…APPGPTLGTL (85 aa)) form a disordered region. Residues 23 to 53 (ENHEVLAGPDEHPQDTDARDADGEAREREPA) show a composition bias toward basic and acidic residues. Over residues 66–76 (LESPLPEASSA) the composition is skewed to low complexity. Serine 103 is subject to Phosphoserine. Residue cysteine 137 is the Nucleophile of the active site. Residue histidine 319 is the Proton acceptor of the active site. The interval 388–426 (QVDQDYLIALSLQQQQPRGPLGLTDLELAQQLQQEEYQQ) is ubiquitin-binding domain (UBD). Serine 441 carries the phosphoserine modification. Positions 441–469 (SLQGRGATSGRPAGERRQRPKHESDCILL) are disordered. The segment covering 453-469 (AGERRQRPKHESDCILL) has biased composition (basic and acidic residues).

This sequence belongs to the MINDY deubiquitinase family. FAM63 subfamily.

The catalysed reaction is Thiol-dependent hydrolysis of ester, thioester, amide, peptide and isopeptide bonds formed by the C-terminal Gly of ubiquitin (a 76-residue protein attached to proteins as an intracellular targeting signal).. Hydrolase that can specifically remove 'Lys-48'-linked conjugated ubiquitin from proteins. Has exodeubiquitinase activity and has a preference for long polyubiquitin chains. May play a regulatory role at the level of protein turnover. The protein is Ubiquitin carboxyl-terminal hydrolase MINDY-1 of Homo sapiens (Human).